Reading from the N-terminus, the 149-residue chain is 18 kDa antigen 1 (149 aa).

Residues 21-131 (TAARPAVMPM…KPRKIAVGRG (111 aa)) enclose the sHSP domain.

Belongs to the small heat shock protein (HSP20) family.

Its function is as follows. Not known. This protein is one of the major immune reactive proteins in mycobacteria. The chain is 18 kDa antigen 1 from Mycobacterium intracellulare.